The primary structure comprises 210 residues: Stress-response A/B barrel domain-containing protein DABB1 (210 aa).

2 Stress-response A/B barrel domains span residues V5–W100 and I116–F204.

In terms of assembly, homodimer.

It localises to the cytoplasm. The protein resides in the cytosol. Involved in defense against fungal pathogens. Possesses antifungal activity against diverse pathogenic fungi. The protein is Stress-response A/B barrel domain-containing protein DABB1 of Arabidopsis thaliana (Mouse-ear cress).